Consider the following 296-residue polypeptide: Methylsterol monooxygenase erg25B (296 aa).

The next 3 helical transmembrane spans lie at 50–70 (IMSF…WILI), 98–118 (FVLL…HPMA), and 125–145 (TSVP…FFVL). A Fatty acid hydroxylase domain is found at 140 to 276 (AIFFVLEDTW…FRWWDYLLDT (137 aa)). A Histidine box-1 motif is present at residues 154-158 (HRALH). The short motif at 167-171 (HKIHH) is the Histidine box-2 element. Residues 201–221 (ILWCALTGDLHIFTMYVWIVL) form a helical membrane-spanning segment. The short motif at 251–257 (HHDLHHE) is the Histidine box-3 element.

The protein belongs to the sterol desaturase family. Fe cation serves as cofactor.

Its subcellular location is the endoplasmic reticulum membrane. It participates in steroid metabolism; ergosterol biosynthesis. Sterol-C4-methyl oxidase; part of the third module of ergosterol biosynthesis pathway that includes the late steps of the pathway. Erg25B is a catalytic component of the C-4 demethylation complex that catalyzes the conversion of 4,4-dimethylfecosterol into fecosterol via 4-methylfecosterol. The third module or late pathway involves the ergosterol synthesis itself through consecutive reactions that mainly occur in the endoplasmic reticulum (ER) membrane. Firstly, the squalene synthase erg9 catalyzes the condensation of 2 farnesyl pyrophosphate moieties to form squalene, which is the precursor of all steroids. Squalene synthase is crucial for balancing the incorporation of farnesyl diphosphate (FPP) into sterol and nonsterol isoprene synthesis. Secondly, squalene is converted into lanosterol by the consecutive action of the squalene epoxidase erg1 and the lanosterol synthase erg7. Then, the delta(24)-sterol C-methyltransferase erg6 methylates lanosterol at C-24 to produce eburicol. Eburicol is the substrate of the sterol 14-alpha demethylase encoded by cyp51A and cyp51B, to yield 4,4,24-trimethyl ergosta-8,14,24(28)-trienol. The C-14 reductase erg24 then reduces the C14=C15 double bond which leads to 4,4-dimethylfecosterol. A sequence of further demethylations at C-4, involving the C-4 demethylation complex containing the C-4 methylsterol oxidases erg25A or erg25B, the sterol-4-alpha-carboxylate 3-dehydrogenase erg26 and the 3-keto-steroid reductase erg27, leads to the production of fecosterol via 4-methylfecosterol. The C-8 sterol isomerase erg2 then catalyzes the reaction which results in unsaturation at C-7 in the B ring of sterols and thus converts fecosterol to episterol. The sterol-C5-desaturase erg3B then catalyzes the introduction of a C-5 double bond in the B ring to produce 5-dehydroepisterol. The 2 other sterol-C5-desaturases, erg3A and erg3C, seem to be less important in ergosterol biosynthesis. The C-22 sterol desaturase erg5 further converts 5-dehydroepisterol into ergosta-5,7,22,24(28)-tetraen-3beta-ol by forming the C-22(23) double bond in the sterol side chain. Finally, ergosta-5,7,22,24(28)-tetraen-3beta-ol is substrate of the C-24(28) sterol reductases erg4A and erg4B to produce ergosterol. Possible alternative sterol biosynthetic pathways might exist from fecosterol to ergosterol, depending on the activities of the erg3 isoforms. The polypeptide is Methylsterol monooxygenase erg25B (Aspergillus fumigatus (strain ATCC MYA-4609 / CBS 101355 / FGSC A1100 / Af293) (Neosartorya fumigata)).